Consider the following 121-residue polypeptide: MSQKQEEENPAEETGEEKQDTQEKEGILPERAEEAKLKAKYPSLGQKPGGSDFLMKRLQKGQKYFDSGDYNMAKAKMKNKQLPSAGPDKNLVTGDHIPTPQDLPQRKSSLVTSKLAGGQVE.

The disordered stretch occupies residues 1 to 53 (MSQKQEEENPAEETGEEKQDTQEKEGILPERAEEAKLKAKYPSLGQKPGGSDF). Serine 2 carries the N-acetylserine modification. Phosphoserine is present on serine 2. Residues 16–37 (EEKQDTQEKEGILPERAEEAKL) are compositionally biased toward basic and acidic residues. A Phosphothreonine modification is found at threonine 21. Residue serine 43 is modified to Phosphoserine. Serine 67 carries the post-translational modification Phosphoserine; by GWL. The disordered stretch occupies residues 79–121 (NKQLPSAGPDKNLVTGDHIPTPQDLPQRKSSLVTSKLAGGQVE). A Phosphoserine; by PKA modification is found at serine 109.

This sequence belongs to the endosulfine family. In terms of assembly, interacts (when phosphorylated at Ser-67) with PPP2R2D. Interacts with ABCC8. Interacts with SNCA; interaction is disrupted when phosphorylated at Ser-109. In terms of processing, phosphorylation at Ser-67 by GWL during mitosis is essential for interaction with PPP2R2D (PR55-delta) and subsequent inactivation of PP2A. Phosphorylated by PKA. In terms of tissue distribution, widely expressed with high levels in skeletal muscle and brain and lower levels in the pancreas.

It is found in the cytoplasm. Its function is as follows. Protein phosphatase inhibitor that specifically inhibits protein phosphatase 2A (PP2A) during mitosis. When phosphorylated at Ser-67 during mitosis, specifically interacts with PPP2R2D (PR55-delta) and inhibits its activity, leading to inactivation of PP2A, an essential condition to keep cyclin-B1-CDK1 activity high during M phase. Also acts as a stimulator of insulin secretion by interacting with sulfonylurea receptor (ABCC8), thereby preventing sulfonylurea from binding to its receptor and reducing K(ATP) channel currents. The sequence is that of Alpha-endosulfine (ENSA) from Homo sapiens (Human).